Reading from the N-terminus, the 127-residue chain is Alkaline proteinase inhibitor (127 aa).

The signal sequence occupies residues 1–26; sequence MNINYFVRIVPVAVVLLVGISGASMA. The cysteines at positions 53 and 70 are disulfide-linked.

This sequence belongs to the protease inhibitor I38 family.

It is found in the periplasm. Its function is as follows. Inhibitor of the alkaline protease. This chain is Alkaline proteinase inhibitor (inh), found in Pseudomonas syringae pv. tomato (strain ATCC BAA-871 / DC3000).